A 756-amino-acid chain; its full sequence is Putative beta-xylosidase (756 aa).

Positions 1–18 are cleaved as a signal peptide; it reads MKKLLFTFLVSTGTIFFS. Cys19 carries N-palmitoyl cysteine lipidation. The S-diacylglycerol cysteine moiety is linked to residue Cys19.

This sequence belongs to the glycosyl hydrolase 3 family.

It localises to the cell outer membrane. Functionally, glycoside hydrolase probably involved in ulvan degradation. Ulvan is the main polysaccharide component of the Ulvales (green seaweed) cell wall. It is composed of disaccharide building blocks comprising 3-sulfated rhamnose (Rha3S) linked to D-glucuronic acid (GlcA), L-iduronic acid (IduA), or D-xylose (Xyl). The sequence is that of Putative beta-xylosidase from Formosa agariphila (strain DSM 15362 / KCTC 12365 / LMG 23005 / KMM 3901 / M-2Alg 35-1).